We begin with the raw amino-acid sequence, 303 residues long: UDP-N-acetylenolpyruvoylglucosamine reductase (303 aa).

The 165-residue stretch at 27-191 (VGGPAARLYK…ISAKLQLTPG (165 aa)) folds into the FAD-binding PCMH-type domain. Arg171 is an active-site residue. Catalysis depends on Ser220, which acts as the Proton donor. The active site involves Glu291.

Belongs to the MurB family. The cofactor is FAD.

The protein resides in the cytoplasm. The enzyme catalyses UDP-N-acetyl-alpha-D-muramate + NADP(+) = UDP-N-acetyl-3-O-(1-carboxyvinyl)-alpha-D-glucosamine + NADPH + H(+). It functions in the pathway cell wall biogenesis; peptidoglycan biosynthesis. Its function is as follows. Cell wall formation. The protein is UDP-N-acetylenolpyruvoylglucosamine reductase of Legionella pneumophila (strain Paris).